Here is a 528-residue protein sequence, read N- to C-terminus: UDP-glucuronosyltransferase 2B19 (528 aa).

Residues 1-21 (MSMKWTSALLLIQLSCYLSFG) form the signal peptide. N6-succinyllysine is present on Lys135. The N-linked (GlcNAc...) asparagine glycan is linked to Asn315. A helical transmembrane segment spans residues 493 to 513 (VIGFLLACVATVIFIITKCLF).

This sequence belongs to the UDP-glycosyltransferase family. In terms of tissue distribution, expressed in liver, ovary, prostate, colon, kidney, pancreas, brain, cerebellum, mammary gland and epididymis. Not expressed in small intestine, spleen, bladder, adrenal gland and testis.

Its subcellular location is the microsome membrane. It localises to the endoplasmic reticulum membrane. It carries out the reaction glucuronate acceptor + UDP-alpha-D-glucuronate = acceptor beta-D-glucuronoside + UDP + H(+). Functionally, UDPGT is of major importance in the conjugation and subsequent elimination of potentially toxic xenobiotics and endogenous compounds. This isozyme displays activity toward several classes of xenobiotic substrates: eugenol, 4-methyllumbelliferone, p-nitrophenol, 1-naphthol, p,p'-biphenol, naringenin and o,o'-biphenol. Active also on 3a-hydroxy and 17b-hydroxy positions of steroids. In terms of biological role, contributes to the formation of androgen glucuronide in extrahepatic steroid target tissues such as the prostate. The polypeptide is UDP-glucuronosyltransferase 2B19 (UGT2B19) (Macaca fascicularis (Crab-eating macaque)).